A 304-amino-acid polypeptide reads, in one-letter code: Undecaprenyl-diphosphatase (304 aa).

Transmembrane regions (helical) follow at residues 5 to 25, 47 to 67, 72 to 92, 111 to 131, 137 to 157, 209 to 231, 248 to 268, and 283 to 303; these read FLFILKALIIAIVEGLTEFVP, GFPEMYEVVIQLGAILAVVVL, ISSSVVEFLCYIFSFIGLKTS, FGINVIIGTIPAAILGLLFHD, LFSTKTVAIGFIVGGILLIVI, ISGLSTTVATEFTFFLAIPAMVG, TNWISLILGFIVAFIVSLVVI, and FAIYRVFAGIVLAILIFTKVI.

It belongs to the UppP family.

Its subcellular location is the cell membrane. It catalyses the reaction di-trans,octa-cis-undecaprenyl diphosphate + H2O = di-trans,octa-cis-undecaprenyl phosphate + phosphate + H(+). In terms of biological role, catalyzes the dephosphorylation of undecaprenyl diphosphate (UPP). Confers resistance to bacitracin. In Clostridium perfringens (strain ATCC 13124 / DSM 756 / JCM 1290 / NCIMB 6125 / NCTC 8237 / Type A), this protein is Undecaprenyl-diphosphatase.